The sequence spans 378 residues: Flagellin E (378 aa).

Coiled-coil stretches lie at residues 98–139 (QSAN…KLLN) and 311–339 (MQNRFQHAISNLDNVHENLAASNSRIKDA).

Belongs to the bacterial flagellin family. Heteromer of multiple flagellin subunits including FlaA, FlaB, FlaC, FlaD and FlaE.

It localises to the secreted. Its subcellular location is the bacterial flagellum. Functionally, flagellin is the subunit protein which polymerizes to form the filaments of bacterial flagella. FlaE is not essential for flagellar synthesis and motility. In Vibrio cholerae serotype O1 (strain ATCC 39541 / Classical Ogawa 395 / O395), this protein is Flagellin E (flaE).